A 399-amino-acid chain; its full sequence is S-adenosylmethionine synthase (399 aa).

H17 provides a ligand contact to ATP. Residue D19 participates in Mg(2+) binding. E45 lines the K(+) pocket. The L-methionine site is built by E58 and Q101. Residues 101 to 111 are flexible loop; that stretch reads QSPDIAQGVDE. ATP-binding positions include 177 to 179, 244 to 245, D253, 259 to 260, A276, and K280; these read DAK, RF, and RK. D253 is a binding site for L-methionine. K284 contacts L-methionine.

Belongs to the AdoMet synthase family. Homotetramer; dimer of dimers. It depends on Mg(2+) as a cofactor. The cofactor is K(+).

It is found in the cytoplasm. The enzyme catalyses L-methionine + ATP + H2O = S-adenosyl-L-methionine + phosphate + diphosphate. It participates in amino-acid biosynthesis; S-adenosyl-L-methionine biosynthesis; S-adenosyl-L-methionine from L-methionine: step 1/1. Functionally, catalyzes the formation of S-adenosylmethionine (AdoMet) from methionine and ATP. The overall synthetic reaction is composed of two sequential steps, AdoMet formation and the subsequent tripolyphosphate hydrolysis which occurs prior to release of AdoMet from the enzyme. The protein is S-adenosylmethionine synthase of Listeria monocytogenes serovar 1/2a (strain ATCC BAA-679 / EGD-e).